Here is a 202-residue protein sequence, read N- to C-terminus: uncharacterized protein (202 aa).

The signal sequence occupies residues Met1–Ala18.

To E.coli YebB.

This is an uncharacterized protein from Escherichia coli (strain K12).